A 404-amino-acid polypeptide reads, in one-letter code: Serine/threonine transporter SstT (404 aa).

Transmembrane regions (helical) follow at residues 17-37 (IGIG…VTAI), 39-59 (ILGQ…VFAL), 75-95 (MTLI…VAVI), 138-158 (ALAT…GLAL), 179-199 (IVVW…FSTV), 212-232 (LLIL…NPLL), 287-307 (IPLG…VLTL), 319-339 (FLTA…ASGV), and 354-374 (FGIS…VGVI).

It belongs to the dicarboxylate/amino acid:cation symporter (DAACS) (TC 2.A.23) family.

The protein resides in the cell membrane. It carries out the reaction L-serine(in) + Na(+)(in) = L-serine(out) + Na(+)(out). It catalyses the reaction L-threonine(in) + Na(+)(in) = L-threonine(out) + Na(+)(out). Functionally, involved in the import of serine and threonine into the cell, with the concomitant import of sodium (symport system). In Streptococcus equi subsp. equi (strain 4047), this protein is Serine/threonine transporter SstT.